A 29-amino-acid polypeptide reads, in one-letter code: Cytochrome b6-f complex subunit 8 (29 aa).

A helical transmembrane segment spans residues 3–23; sequence IISLGWSSLLVVFTFSLSLVV.

It belongs to the PetN family. In terms of assembly, the 4 large subunits of the cytochrome b6-f complex are cytochrome b6, subunit IV (17 kDa polypeptide, PetD), cytochrome f and the Rieske protein, while the 4 small subunits are PetG, PetL, PetM and PetN. The complex functions as a dimer.

Its subcellular location is the plastid. It is found in the chloroplast thylakoid membrane. In terms of biological role, component of the cytochrome b6-f complex, which mediates electron transfer between photosystem II (PSII) and photosystem I (PSI), cyclic electron flow around PSI, and state transitions. The chain is Cytochrome b6-f complex subunit 8 from Rhodomonas salina (Cryptomonas salina).